Here is a 185-residue protein sequence, read N- to C-terminus: ATP-dependent protease subunit HslV (185 aa).

T12 is a catalytic residue. Positions 168, 171, and 174 each coordinate Na(+).

This sequence belongs to the peptidase T1B family. HslV subfamily. In terms of assembly, a double ring-shaped homohexamer of HslV is capped on each side by a ring-shaped HslU homohexamer. The assembly of the HslU/HslV complex is dependent on binding of ATP.

It is found in the cytoplasm. It carries out the reaction ATP-dependent cleavage of peptide bonds with broad specificity.. With respect to regulation, allosterically activated by HslU binding. Functionally, protease subunit of a proteasome-like degradation complex believed to be a general protein degrading machinery. This is ATP-dependent protease subunit HslV from Cereibacter sphaeroides (strain KD131 / KCTC 12085) (Rhodobacter sphaeroides).